A 571-amino-acid polypeptide reads, in one-letter code: Urease subunit alpha (571 aa).

One can recognise a Urease domain in the interval 134–571 (GAIDTHIHFI…LPMAQRYFLF (438 aa)). Positions 139, 141, and 222 each coordinate Ni(2+). At K222 the chain carries N6-carboxylysine. H224 contacts substrate. Positions 251 and 277 each coordinate Ni(2+). H325 acts as the Proton donor in catalysis. D365 is a Ni(2+) binding site.

It belongs to the metallo-dependent hydrolases superfamily. Urease alpha subunit family. Heterotrimer of UreA (gamma), UreB (beta) and UreC (alpha) subunits. Three heterotrimers associate to form the active enzyme. Requires Ni cation as cofactor. Post-translationally, carboxylation allows a single lysine to coordinate two nickel ions.

Its subcellular location is the cytoplasm. It carries out the reaction urea + 2 H2O + H(+) = hydrogencarbonate + 2 NH4(+). Its pathway is nitrogen metabolism; urea degradation; CO(2) and NH(3) from urea (urease route): step 1/1. The sequence is that of Urease subunit alpha from Bordetella pertussis (strain Tohama I / ATCC BAA-589 / NCTC 13251).